The sequence spans 451 residues: MTKPRQYHITTFGCQMNKADSERMAGILEEMGYHFTEDPYAADLVLYNTCTIRDNAEQKVYSYLGRQAKRKQEKPDLTLIVAGCVAQQEGESLLRRVPELDLIMGPQHANRLQDLLEQVEGGSQVVATEPIHIVEDITKPRRDSTVTAWVNVIYGCNEHCTYCVVPGVRGTEQSRYPEAIRAEMEELGRQGFKEVTLLGQNIDAYGRDLPGTTPEGRNKYTLTDLLYYVHDVPGIERIRFATSHPRYFTERLIKACQELPKVCEHFHIPFQSGDNEVLKAMRRGYTHEKYRRIINTIRSYMPDASISADAIVAFPGETEEQFENTLKLVDEIGFDQLNTAAYSPRPGTPAATWDNQLSEEVKGDRLQRLNHLVAQKAAERSQRYAGRIEEVLVEDQNPKNPSQVMGRTRGNRLTFFEGEINELKGKIVAVKITEARAFSLTGEAVEALVTA.

The 117-residue stretch at 5 to 121 (RQYHITTFGC…LQDLLEQVEG (117 aa)) folds into the MTTase N-terminal domain. [4Fe-4S] cluster contacts are provided by Cys14, Cys50, Cys84, Cys156, Cys160, and Cys163. Residues 142 to 379 (RDSTVTAWVN…NHLVAQKAAE (238 aa)) form the Radical SAM core domain. Positions 382–446 (QRYAGRIEEV…AFSLTGEAVE (65 aa)) constitute a TRAM domain.

It belongs to the methylthiotransferase family. MiaB subfamily. As to quaternary structure, monomer. The cofactor is [4Fe-4S] cluster.

It localises to the cytoplasm. The catalysed reaction is N(6)-dimethylallyladenosine(37) in tRNA + (sulfur carrier)-SH + AH2 + 2 S-adenosyl-L-methionine = 2-methylsulfanyl-N(6)-dimethylallyladenosine(37) in tRNA + (sulfur carrier)-H + 5'-deoxyadenosine + L-methionine + A + S-adenosyl-L-homocysteine + 2 H(+). Catalyzes the methylthiolation of N6-(dimethylallyl)adenosine (i(6)A), leading to the formation of 2-methylthio-N6-(dimethylallyl)adenosine (ms(2)i(6)A) at position 37 in tRNAs that read codons beginning with uridine. This chain is tRNA-2-methylthio-N(6)-dimethylallyladenosine synthase, found in Picosynechococcus sp. (strain ATCC 27264 / PCC 7002 / PR-6) (Agmenellum quadruplicatum).